The chain runs to 303 residues: Protoheme IX farnesyltransferase (303 aa).

9 consecutive transmembrane segments (helical) span residues 26–46 (VVAL…PGMV), 48–68 (IDIL…AAAV), 98–118 (AILF…VWVN), 120–140 (LTAW…TFWL), 148–168 (IVIG…AVTG), 174–194 (ALLL…ALAV), 221–241 (ILLY…THML), 244–264 (LYLL…VAMM), and 278–298 (YSIV…YLLP).

Belongs to the UbiA prenyltransferase family. Protoheme IX farnesyltransferase subfamily.

Its subcellular location is the cell inner membrane. The catalysed reaction is heme b + (2E,6E)-farnesyl diphosphate + H2O = Fe(II)-heme o + diphosphate. Its pathway is porphyrin-containing compound metabolism; heme O biosynthesis; heme O from protoheme: step 1/1. Functionally, converts heme B (protoheme IX) to heme O by substitution of the vinyl group on carbon 2 of heme B porphyrin ring with a hydroxyethyl farnesyl side group. This is Protoheme IX farnesyltransferase from Saccharophagus degradans (strain 2-40 / ATCC 43961 / DSM 17024).